Reading from the N-terminus, the 94-residue chain is MNLNMLHDNVLIEALEECNSSSPIQLPDSAKKKPTQGKVVAVGPGVYNHSGNILPMTIKVGDVVFYRQWAGNEIEFHEKKYIVMKESDIIAKEA.

Belongs to the GroES chaperonin family. Heptamer of 7 subunits arranged in a ring. Interacts with the chaperonin GroEL.

Its subcellular location is the cytoplasm. Functionally, together with the chaperonin GroEL, plays an essential role in assisting protein folding. The GroEL-GroES system forms a nano-cage that allows encapsulation of the non-native substrate proteins and provides a physical environment optimized to promote and accelerate protein folding. GroES binds to the apical surface of the GroEL ring, thereby capping the opening of the GroEL channel. In Ehrlichia chaffeensis, this protein is Co-chaperonin GroES.